Reading from the N-terminus, the 268-residue chain is Ribosomal RNA small subunit methyltransferase A (268 aa).

Positions 18, 20, 45, 66, 91, and 112 each coordinate S-adenosyl-L-methionine.

The protein belongs to the class I-like SAM-binding methyltransferase superfamily. rRNA adenine N(6)-methyltransferase family. RsmA subfamily.

It is found in the cytoplasm. It carries out the reaction adenosine(1518)/adenosine(1519) in 16S rRNA + 4 S-adenosyl-L-methionine = N(6)-dimethyladenosine(1518)/N(6)-dimethyladenosine(1519) in 16S rRNA + 4 S-adenosyl-L-homocysteine + 4 H(+). In terms of biological role, specifically dimethylates two adjacent adenosines (A1518 and A1519) in the loop of a conserved hairpin near the 3'-end of 16S rRNA in the 30S particle. May play a critical role in biogenesis of 30S subunits. The protein is Ribosomal RNA small subunit methyltransferase A of Shewanella putrefaciens (strain CN-32 / ATCC BAA-453).